A 284-amino-acid polypeptide reads, in one-letter code: uncharacterized protein (284 aa).

Residues 1–27 are compositionally biased toward polar residues; that stretch reads MSNLPTSTPVSPSNLAEENPKSNNPES. 2 disordered regions span residues 1–29 and 248–284; these read MSNL…ESSE and TRDS…LKKK.

This is an uncharacterized protein from Caenorhabditis elegans.